The sequence spans 147 residues: S-protein homolog 10 (147 aa).

Residues 1 to 20 (MNCFSYFFLVIILCAGLNNA) form the signal peptide.

This sequence belongs to the plant self-incompatibility (S1) protein family.

It is found in the secreted. This is S-protein homolog 10 from Arabidopsis thaliana (Mouse-ear cress).